The following is a 187-amino-acid chain: Abscisic acid receptor PYL9 (187 aa).

Residues 27-178 (HLCRENQCTS…NLKSLADVSE (152 aa)) are START-like. 2 disulfides stabilise this stretch: Cys-29–Cys-159 and Cys-34–Cys-159. Abscisate contacts are provided by residues Lys-63, 91–96 (ATTSTE), 118–124 (RLKNYSS), and Glu-143. Residues 87 to 91 (SGLPA) carry the Gate loop motif. The Latch loop motif lies at 117 to 119 (HRL).

Belongs to the PYR/PYL/RCAR abscisic acid intracellular receptor family. In terms of assembly, homodimer. Monomer. Binds ABA on one subunit only. Binds to CARs protein in an ABA-independent manner, both at the plasma membrane and in the nucleus. Binds specifically (+)-ABA but not (-)-ABA. Interacts with HAB1, ABI1 and ABI2, and possibly with other PP2Cs. Interacts with TOPP1. Interacts with DDA1. As to expression, expressed in root tips, vascular tissues, stomata, flowers, pollen tubes and developing seeds.

It is found in the cytoplasm. The protein resides in the nucleus. The protein localises to the cell membrane. In terms of biological role, receptor for abscisic acid (ABA) required for ABA-mediated responses such as stomatal closure and germination inhibition. Inhibits the activity of group-A protein phosphatases type 2C (PP2Cs) in an ABA-independent manner but more efficiently when activated by ABA. Confers enhanced sensitivity to ABA. Can be activated only by (+)-ABA but not by (-)-ABA. This is Abscisic acid receptor PYL9 (PYL9) from Arabidopsis thaliana (Mouse-ear cress).